Here is a 590-residue protein sequence, read N- to C-terminus: Aspartate--tRNA ligase (590 aa).

Glu172 serves as a coordination point for L-aspartate. The segment at 196 to 199 is aspartate; that stretch reads QLFK. Arg218 is a binding site for L-aspartate. Residues 218–220 and Gln227 each bind ATP; that span reads RDE. Residue His449 coordinates L-aspartate. Residue Glu483 coordinates ATP. Residue Arg490 participates in L-aspartate binding. Position 535–538 (535–538) interacts with ATP; sequence GLDR.

The protein belongs to the class-II aminoacyl-tRNA synthetase family. Type 1 subfamily. As to quaternary structure, homodimer.

The protein resides in the cytoplasm. It carries out the reaction tRNA(Asp) + L-aspartate + ATP = L-aspartyl-tRNA(Asp) + AMP + diphosphate. Its function is as follows. Catalyzes the attachment of L-aspartate to tRNA(Asp) in a two-step reaction: L-aspartate is first activated by ATP to form Asp-AMP and then transferred to the acceptor end of tRNA(Asp). This chain is Aspartate--tRNA ligase, found in Glaesserella parasuis serovar 5 (strain SH0165) (Haemophilus parasuis).